We begin with the raw amino-acid sequence, 165 residues long: Phosphopantetheine adenylyltransferase (165 aa).

Thr9 lines the substrate pocket. Residues Thr9–Phe10 and His17 each bind ATP. Residues Lys41, Leu73, and Arg87 each contribute to the substrate site. Residues Gly88–Arg90, Glu98, and Tyr123–Thr129 contribute to the ATP site.

Belongs to the bacterial CoaD family. In terms of assembly, homohexamer. Requires Mg(2+) as cofactor.

Its subcellular location is the cytoplasm. The catalysed reaction is (R)-4'-phosphopantetheine + ATP + H(+) = 3'-dephospho-CoA + diphosphate. It participates in cofactor biosynthesis; coenzyme A biosynthesis; CoA from (R)-pantothenate: step 4/5. In terms of biological role, reversibly transfers an adenylyl group from ATP to 4'-phosphopantetheine, yielding dephospho-CoA (dPCoA) and pyrophosphate. The sequence is that of Phosphopantetheine adenylyltransferase from Polynucleobacter necessarius subsp. necessarius (strain STIR1).